Here is a 1139-residue protein sequence, read N- to C-terminus: Phospholipid-transporting ATPase tat-1 (1139 aa).

3 helical membrane-spanning segments follow: residues 78–98 (YTTAVPFLIILSVSALKEIFE), 276–296 (IIFLFFVLVALALISATGSEI), and 318–338 (SFLWGVLTFFILYNNLIPISL). Catalysis depends on Asp-388, which acts as the 4-aspartylphosphate intermediate. The next 6 helical transmembrane spans lie at 831–851 (ICLYIIELWFAMFSAWSGQTI), 855–875 (WTIGMFNVIFTAWPPVVLGLF), 901–921 (IGNFSLWIGLAIVHSLSLFFL), 935–955 (GLTGGWLMLGNCAYTFVVATV), 972–992 (VACIGSIGLWIVFVIVYSLVF), and 1013–1033 (YTFWLALLFIPLATLLWDLVI).

It belongs to the cation transport ATPase (P-type) (TC 3.A.3) family. Type IV subfamily.

It localises to the cell membrane. The protein resides in the early endosome membrane. Its subcellular location is the recycling endosome membrane. The enzyme catalyses ATP + H2O + phospholipidSide 1 = ADP + phosphate + phospholipidSide 2.. It carries out the reaction a 1,2-diacyl-sn-glycero-3-phospho-L-serine(out) + ATP + H2O = a 1,2-diacyl-sn-glycero-3-phospho-L-serine(in) + ADP + phosphate + H(+). In terms of biological role, transports phosphatidylserine from the outer to the inner leaflet of the plasma membrane, thereby maintaining the enrichment of this phospholipid in the inner leaflet. Ectopic exposure of phosphatidylserine on the cell surface may result in removal of living cells by neighboring phagocytes. Regulation of the phosphatidylserine distribution in plasma membranes is likely to help in the maintenance and control of the membrane surface charge. Plays a role in the formation of the tubular membrane structure and in membrane trafficking and is specifically involved in the recycling and degradation of endocytic cargo, likely with its chaperone protein chat-1. In Caenorhabditis elegans, this protein is Phospholipid-transporting ATPase tat-1 (tat-1).